Reading from the N-terminus, the 432-residue chain is Muscle cell intermediate filament protein OV71 (432 aa).

The tract at residues 1–111 (KLIDELEEYK…RVHDQEISEL (111 aa)) is coil 1B. The 277-residue stretch at 1–277 (KLIDELEEYK…KMLEGEENRA (277 aa)) folds into the IF rod domain. Residues 112–128 (QAMAARDTTSENREYFK) are linker 12. The segment at 129–277 (NELSSAIRDI…KMLEGEENRA (149 aa)) is coil 2. The segment at 278-432 (GLRQLVEQVV…HIQRSSHTIS (155 aa)) is tail. The region spanning 310–427 (SRTSFQRSAK…EERASHIQRS (118 aa)) is the LTD domain.

Belongs to the intermediate filament family.

In Onchocerca volvulus, this protein is Muscle cell intermediate filament protein OV71 (OV71).